The primary structure comprises 85 residues: Protein WIR1B (85 aa).

Topologically, residues 1–12 are cytoplasmic; sequence MASHSAAGRRPT. A helical transmembrane segment spans residues 13-34; that stretch reads ALVHIALFVAIAAVIINSSVCL. The Extracellular segment spans residues 35-85; that stretch reads GAAVHDAATSGTGALDPNVPAVPTPGGAGQPYTGRGCRTVYGCKPPAGSQP.

It is found in the membrane. In terms of biological role, associated with pathogen defense. The sequence is that of Protein WIR1B (WIR1B) from Triticum aestivum (Wheat).